We begin with the raw amino-acid sequence, 288 residues long: Polyamine aminopropyltransferase (288 aa).

One can recognise a PABS domain in the interval 9-238 (ETLHDQFGQY…GIMTFAWATD (230 aa)). Glutamine 33 provides a ligand contact to S-methyl-5'-thioadenosine. Positions 64 and 88 each coordinate spermidine. Residues glutamate 108 and 140 to 141 (DG) contribute to the S-methyl-5'-thioadenosine site. Aspartate 158 acts as the Proton acceptor in catalysis. 158–161 (DCTD) contributes to the spermidine binding site. Proline 165 is a binding site for S-methyl-5'-thioadenosine.

It belongs to the spermidine/spermine synthase family. As to quaternary structure, homodimer or homotetramer.

It localises to the cytoplasm. The catalysed reaction is S-adenosyl 3-(methylsulfanyl)propylamine + putrescine = S-methyl-5'-thioadenosine + spermidine + H(+). It functions in the pathway amine and polyamine biosynthesis; spermidine biosynthesis; spermidine from putrescine: step 1/1. In terms of biological role, catalyzes the irreversible transfer of a propylamine group from the amino donor S-adenosylmethioninamine (decarboxy-AdoMet) to putrescine (1,4-diaminobutane) to yield spermidine. The protein is Polyamine aminopropyltransferase of Shigella sonnei (strain Ss046).